The primary structure comprises 946 residues: Protein translocase subunit SecA (946 aa).

ATP is bound by residues Q87, 105-109 (GEGKT), and D524. 2 disordered regions span residues 872–892 (PEQPRELPPMEVHKMDPNTGE) and 904–946 (PADT…GRYA). The span at 907–917 (TVEKSERDPNR) shows a compositional bias: basic and acidic residues. Residues C930, C932, C941, and H942 each contribute to the Zn(2+) site. Positions 936 to 946 (KKYKHCHGRYA) are enriched in basic residues.

Belongs to the SecA family. As to quaternary structure, monomer and homodimer. Part of the essential Sec protein translocation apparatus which comprises SecA, SecYEG and auxiliary proteins SecDF-YajC and YidC. It depends on Zn(2+) as a cofactor.

It localises to the cell inner membrane. The protein resides in the cytoplasm. The catalysed reaction is ATP + H2O + cellular proteinSide 1 = ADP + phosphate + cellular proteinSide 2.. Part of the Sec protein translocase complex. Interacts with the SecYEG preprotein conducting channel. Has a central role in coupling the hydrolysis of ATP to the transfer of proteins into and across the cell membrane, serving both as a receptor for the preprotein-SecB complex and as an ATP-driven molecular motor driving the stepwise translocation of polypeptide chains across the membrane. The sequence is that of Protein translocase subunit SecA from Rhodopseudomonas palustris (strain BisB5).